The chain runs to 384 residues: MEDIPTMVKVDRGESQILSCRGRRCGLKVLGYVTGDMKEFANWLKDKPVVLQFMDWILRGISQVVFVSNPISGILILAGLLVQNPWWALCGCVGTVVSTLTALLLSQDRSAIAAGLQGYNATLVGILMAVFSDKGDYFWWLIFPVSAMSMTCPVFSSALSSLFSKWDLPVFTLPFNMALSLYLSATGHYNTFFPSKLFMPVSSVPNITWSELSALELLKSLPVGVGQIYGCDNPWTGAIFLCAILLSSPLMCLHAAIGSLLGVIAGLSLAAPFKDIYSGLWGFNSSLACIAIGGMFMALTWQTHLLALACALFTAYFGACMTHLMAAVHLPACTWSFCLATLLFLLLTTENPNIYRMPLSKVTYSEENRIFYLQNKKRVVDSPL.

The next 5 membrane-spanning stretches (helical) occupy residues 61–81 (ISQV…AGLL), 85–105 (PWWA…ALLL), 111–131 (AIAA…MAVF), 138–158 (FWWL…FSSA), and 168–188 (LPVF…ATGH). The N-linked (GlcNAc...) asparagine glycan is linked to Asn-206. The next 4 membrane-spanning stretches (helical) occupy residues 250–270 (LMCL…LSLA), 279–299 (GLWG…FMAL), 305–325 (LLAL…THLM), and 327–347 (AVHL…FLLL).

The protein belongs to the urea transporter family. Homotrimer; each subunit contains a pore through which urea permeates. Identified in a complex with STOM. As to expression, expressed in brain, spleen, kidney, testis and lung, with highest levels in brain.

The protein resides in the cell membrane. It is found in the basolateral cell membrane. It carries out the reaction urea(in) = urea(out). Its function is as follows. Mediates the transport of urea driven by a concentration gradient across the cell membrane. Mediates the transport of urea across the cell membranes of erythrocytes and the renal inner medullary collecting duct which is critical to the urinary concentrating mechanism. Facilitates water transport in erythrocytes. The chain is Urea transporter 1 (Slc14a1) from Rattus norvegicus (Rat).